A 315-amino-acid polypeptide reads, in one-letter code: Prephenate dehydratase (315 aa).

Residues 3-190 form the Prephenate dehydratase domain; sequence RIAYLGPQGT…ARTRFVLVGR (188 aa). One can recognise an ACT domain in the interval 204–281; it reads SVALRLPNTP…EDVRYLGSWP (78 aa).

In terms of assembly, homodimer.

The enzyme catalyses prephenate + H(+) = 3-phenylpyruvate + CO2 + H2O. The protein operates within amino-acid biosynthesis; L-phenylalanine biosynthesis; phenylpyruvate from prephenate: step 1/1. This chain is Prephenate dehydratase (pheA), found in Mycobacterium sp. (strain KMS).